The following is a 149-amino-acid chain: Cytochrome c-555 (149 aa).

Residues 1–20 (MKRTMIVVTTLLLGAGAVMA) form the signal peptide. Residues Met-32, Cys-137, Cys-140, and His-141 each contribute to the heme c site.

As to quaternary structure, monomer. Post-translationally, binds 1 heme c group covalently per subunit.

It localises to the periplasm. Functionally, low-spin monoheme cytochrome. This Bradyrhizobium diazoefficiens (strain JCM 10833 / BCRC 13528 / IAM 13628 / NBRC 14792 / USDA 110) protein is Cytochrome c-555 (cycC).